The chain runs to 220 residues: Cell division protein SepF (220 aa).

Residues 1–120 (MAIKDAFNKM…RREQYQHAAH (120 aa)) form a disordered region. Basic and acidic residues predominate over residues 26–35 (LSSKKQEEPV). Low complexity predominate over residues 39–79 (QQTSRPNQQQQAARASQPQQPKQARPQMQAQQRPQSQSRAA). The segment covering 93–102 (VSHDYNDRRA) has biased composition (basic and acidic residues).

This sequence belongs to the SepF family. As to quaternary structure, homodimer. Interacts with FtsZ.

Its subcellular location is the cytoplasm. Functionally, cell division protein that is part of the divisome complex and is recruited early to the Z-ring. Probably stimulates Z-ring formation, perhaps through the cross-linking of FtsZ protofilaments. Its function overlaps with FtsA. The protein is Cell division protein SepF of Streptococcus equi subsp. equi (strain 4047).